The following is a 404-amino-acid chain: Argininosuccinate synthase (404 aa).

ATP is bound by residues 10–18 and A37; that span reads AFSGGLDTS. Residues Y88 and S93 each contribute to the L-citrulline site. G118 is an ATP binding site. Residues T120, N124, and D125 each coordinate L-aspartate. N124 serves as a coordination point for L-citrulline. 5 residues coordinate L-citrulline: R128, S179, S188, E264, and Y276.

This sequence belongs to the argininosuccinate synthase family. Type 1 subfamily. Homotetramer.

It is found in the cytoplasm. It carries out the reaction L-citrulline + L-aspartate + ATP = 2-(N(omega)-L-arginino)succinate + AMP + diphosphate + H(+). The protein operates within amino-acid biosynthesis; L-arginine biosynthesis; L-arginine from L-ornithine and carbamoyl phosphate: step 2/3. The chain is Argininosuccinate synthase from Nitrosomonas eutropha (strain DSM 101675 / C91 / Nm57).